The primary structure comprises 562 residues: Dihydroxy-acid dehydratase (562 aa).

Cys-51 contacts [2Fe-2S] cluster. Residue Asp-83 participates in Mg(2+) binding. Residue Cys-124 participates in [2Fe-2S] cluster binding. 2 residues coordinate Mg(2+): Asp-125 and Lys-126. Lys-126 bears the N6-carboxylysine mark. Position 196 (Cys-196) interacts with [2Fe-2S] cluster. Mg(2+) is bound at residue Glu-448. The Proton acceptor role is filled by Ser-474.

It belongs to the IlvD/Edd family. In terms of assembly, homodimer. [2Fe-2S] cluster is required as a cofactor. Requires Mg(2+) as cofactor.

It carries out the reaction (2R)-2,3-dihydroxy-3-methylbutanoate = 3-methyl-2-oxobutanoate + H2O. It catalyses the reaction (2R,3R)-2,3-dihydroxy-3-methylpentanoate = (S)-3-methyl-2-oxopentanoate + H2O. Its pathway is amino-acid biosynthesis; L-isoleucine biosynthesis; L-isoleucine from 2-oxobutanoate: step 3/4. It functions in the pathway amino-acid biosynthesis; L-valine biosynthesis; L-valine from pyruvate: step 3/4. Functionally, functions in the biosynthesis of branched-chain amino acids. Catalyzes the dehydration of (2R,3R)-2,3-dihydroxy-3-methylpentanoate (2,3-dihydroxy-3-methylvalerate) into 2-oxo-3-methylpentanoate (2-oxo-3-methylvalerate) and of (2R)-2,3-dihydroxy-3-methylbutanoate (2,3-dihydroxyisovalerate) into 2-oxo-3-methylbutanoate (2-oxoisovalerate), the penultimate precursor to L-isoleucine and L-valine, respectively. This chain is Dihydroxy-acid dehydratase, found in Pyrobaculum aerophilum (strain ATCC 51768 / DSM 7523 / JCM 9630 / CIP 104966 / NBRC 100827 / IM2).